Reading from the N-terminus, the 285-residue chain is 4-diphosphocytidyl-2-C-methyl-D-erythritol kinase (285 aa).

Lys-12 is a catalytic residue. 95–105 (PVGAGLAGGST) contacts ATP. Asp-137 is a catalytic residue.

The protein belongs to the GHMP kinase family. IspE subfamily.

The enzyme catalyses 4-CDP-2-C-methyl-D-erythritol + ATP = 4-CDP-2-C-methyl-D-erythritol 2-phosphate + ADP + H(+). It functions in the pathway isoprenoid biosynthesis; isopentenyl diphosphate biosynthesis via DXP pathway; isopentenyl diphosphate from 1-deoxy-D-xylulose 5-phosphate: step 3/6. Its function is as follows. Catalyzes the phosphorylation of the position 2 hydroxy group of 4-diphosphocytidyl-2C-methyl-D-erythritol. The chain is 4-diphosphocytidyl-2-C-methyl-D-erythritol kinase from Syntrophomonas wolfei subsp. wolfei (strain DSM 2245B / Goettingen).